The following is a 714-amino-acid chain: ABC transporter B family member 28 (714 aa).

5 helical membrane passes run 109–129 (LSVC…MPVF), 161–181 (IFTI…MAIL), 240–260 (ICIL…LMLA), 340–360 (VAVY…VKTG), and 361–381 (ELAV…TFAV). Residues 109–393 (LSVCLLTLLG…LVNTFGDLRG (285 aa)) form the ABC transmembrane type-1 domain. In terms of domain architecture, ABC transporter spans 470–708 (VCLDDVHFAY…KGSYASLVGT (239 aa)). ATP is bound at residue 505-512 (GSSGAGKS).

It belongs to the ABC transporter superfamily. ABCB family. Multidrug resistance exporter (TC 3.A.1.201) subfamily.

It is found in the membrane. The chain is ABC transporter B family member 28 (ABCB28) from Arabidopsis thaliana (Mouse-ear cress).